A 315-amino-acid polypeptide reads, in one-letter code: Acetyl-coenzyme A carboxylase carboxyl transferase subunit alpha (315 aa).

Positions 32–289 (EIDMLEASLE…KEAFTKQLSE (258 aa)) constitute a CoA carboxyltransferase C-terminal domain.

Belongs to the AccA family. In terms of assembly, acetyl-CoA carboxylase is a heterohexamer composed of biotin carboxyl carrier protein (AccB), biotin carboxylase (AccC) and two subunits each of ACCase subunit alpha (AccA) and ACCase subunit beta (AccD).

It is found in the cytoplasm. The catalysed reaction is N(6)-carboxybiotinyl-L-lysyl-[protein] + acetyl-CoA = N(6)-biotinyl-L-lysyl-[protein] + malonyl-CoA. The protein operates within lipid metabolism; malonyl-CoA biosynthesis; malonyl-CoA from acetyl-CoA: step 1/1. Functionally, component of the acetyl coenzyme A carboxylase (ACC) complex. First, biotin carboxylase catalyzes the carboxylation of biotin on its carrier protein (BCCP) and then the CO(2) group is transferred by the carboxyltransferase to acetyl-CoA to form malonyl-CoA. This is Acetyl-coenzyme A carboxylase carboxyl transferase subunit alpha from Staphylococcus carnosus (strain TM300).